Consider the following 1215-residue polypeptide: Pesticidal crystal protein Cry1Ka (1215 aa).

The protein belongs to the delta endotoxin family.

Its function is as follows. Promotes colloidosmotic lysis by binding to the midgut epithelial cells of insects. Selectively toxic to Artogeia rapae but not active on Plutella xylostella. The protein is Pesticidal crystal protein Cry1Ka (cry1Ka) of Bacillus thuringiensis subsp. morrisoni.